We begin with the raw amino-acid sequence, 521 residues long: GMP synthase [glutamine-hydrolyzing] (521 aa).

Residues 8–203 (KILILDFGAQ…VVDVCGCQTL (196 aa)) enclose the Glutamine amidotransferase type-1 domain. The active-site Nucleophile is cysteine 85. Residues histidine 177 and glutamate 179 contribute to the active site. One can recognise a GMPS ATP-PPase domain in the interval 204 to 396 (WTAANIIDDQ…LGLPRTMVYR (193 aa)). Position 231–237 (231–237 (SGGVDSS)) interacts with ATP.

In terms of assembly, homodimer.

It catalyses the reaction XMP + L-glutamine + ATP + H2O = GMP + L-glutamate + AMP + diphosphate + 2 H(+). It functions in the pathway purine metabolism; GMP biosynthesis; GMP from XMP (L-Gln route): step 1/1. In terms of biological role, catalyzes the synthesis of GMP from XMP. This chain is GMP synthase [glutamine-hydrolyzing], found in Xanthomonas campestris pv. campestris (strain B100).